The sequence spans 432 residues: Homogentisate 1,2-dioxygenase (432 aa).

The active-site Proton acceptor is the histidine 287. Fe cation is bound by residues histidine 330 and glutamate 336. Tyrosine 345 and histidine 366 together coordinate homogentisate. Histidine 366 contributes to the Fe cation binding site.

This sequence belongs to the homogentisate dioxygenase family. Hexamer; dimer of trimers. Requires Fe cation as cofactor.

It carries out the reaction homogentisate + O2 = 4-maleylacetoacetate + H(+). It functions in the pathway amino-acid degradation; L-phenylalanine degradation; acetoacetate and fumarate from L-phenylalanine: step 4/6. Its function is as follows. Involved in the catabolism of homogentisate (2,5-dihydroxyphenylacetate or 2,5-OH-PhAc), a central intermediate in the degradation of phenylalanine and tyrosine. Catalyzes the oxidative ring cleavage of the aromatic ring of homogentisate to yield maleylacetoacetate. The chain is Homogentisate 1,2-dioxygenase from Pseudomonas aeruginosa (strain ATCC 15692 / DSM 22644 / CIP 104116 / JCM 14847 / LMG 12228 / 1C / PRS 101 / PAO1).